Consider the following 567-residue polypeptide: Proline--tRNA ligase (567 aa).

This sequence belongs to the class-II aminoacyl-tRNA synthetase family. ProS type 1 subfamily. Homodimer.

It localises to the cytoplasm. The catalysed reaction is tRNA(Pro) + L-proline + ATP = L-prolyl-tRNA(Pro) + AMP + diphosphate. Catalyzes the attachment of proline to tRNA(Pro) in a two-step reaction: proline is first activated by ATP to form Pro-AMP and then transferred to the acceptor end of tRNA(Pro). As ProRS can inadvertently accommodate and process non-cognate amino acids such as alanine and cysteine, to avoid such errors it has two additional distinct editing activities against alanine. One activity is designated as 'pretransfer' editing and involves the tRNA(Pro)-independent hydrolysis of activated Ala-AMP. The other activity is designated 'posttransfer' editing and involves deacylation of mischarged Ala-tRNA(Pro). The misacylated Cys-tRNA(Pro) is not edited by ProRS. This is Proline--tRNA ligase from Stenotrophomonas maltophilia (strain R551-3).